The primary structure comprises 299 residues: Protease HtpX homolog (299 aa).

The next 2 membrane-spanning stretches (helical) occupy residues 15 to 35 (ILLL…GYLF) and 39 to 59 (GLGG…SMIF). Zn(2+) is bound at residue His-143. Glu-144 is a catalytic residue. His-147 contributes to the Zn(2+) binding site. Helical transmembrane passes span 158–178 (IAVA…RMMW) and 198–218 (IIML…ATLV). Position 227 (Glu-227) interacts with Zn(2+).

The protein belongs to the peptidase M48B family. Zn(2+) is required as a cofactor.

Its subcellular location is the cell membrane. The protein is Protease HtpX homolog of Streptococcus pneumoniae (strain Taiwan19F-14).